A 455-amino-acid chain; its full sequence is Pup--protein ligase (455 aa).

Glutamate 12 is a Mg(2+) binding site. Residue arginine 56 coordinates ATP. Tyrosine 58 contacts Mg(2+). The active-site Proton acceptor is aspartate 60. Mg(2+) is bound at residue glutamate 66. Positions 69 and 422 each coordinate ATP.

This sequence belongs to the Pup ligase/Pup deamidase family. Pup-conjugating enzyme subfamily.

It carries out the reaction ATP + [prokaryotic ubiquitin-like protein]-L-glutamate + [protein]-L-lysine = ADP + phosphate + N(6)-([prokaryotic ubiquitin-like protein]-gamma-L-glutamyl)-[protein]-L-lysine.. Its pathway is protein degradation; proteasomal Pup-dependent pathway. It participates in protein modification; protein pupylation. In terms of biological role, catalyzes the covalent attachment of the prokaryotic ubiquitin-like protein modifier Pup to the proteasomal substrate proteins, thereby targeting them for proteasomal degradation. This tagging system is termed pupylation. The ligation reaction involves the side-chain carboxylate of the C-terminal glutamate of Pup and the side-chain amino group of a substrate lysine. In Acidimicrobium ferrooxidans (strain DSM 10331 / JCM 15462 / NBRC 103882 / ICP), this protein is Pup--protein ligase.